Reading from the N-terminus, the 529-residue chain is BTB/POZ domain-containing protein 6 (529 aa).

A BTB domain is found at 127–197 (ADVHFIVGPA…LYSDEIDLEA (71 aa)).

In terms of assembly, homodimer and heterodimer. Interacts with cul3 via the BTB domain.

It is found in the cytoplasm. Adapter protein for the cul3 E3 ubiquitin-protein ligase complex. Involved in late neuronal development and muscle formation. This chain is BTB/POZ domain-containing protein 6 (btbd6), found in Xenopus laevis (African clawed frog).